A 234-amino-acid chain; its full sequence is tRNA (guanine-N(1)-)-methyltransferase (234 aa).

Residues Gly-112 and 132–137 (IGDFIL) contribute to the S-adenosyl-L-methionine site.

It belongs to the RNA methyltransferase TrmD family. Homodimer.

Its subcellular location is the cytoplasm. It carries out the reaction guanosine(37) in tRNA + S-adenosyl-L-methionine = N(1)-methylguanosine(37) in tRNA + S-adenosyl-L-homocysteine + H(+). Specifically methylates guanosine-37 in various tRNAs. This chain is tRNA (guanine-N(1)-)-methyltransferase, found in Campylobacter jejuni subsp. doylei (strain ATCC BAA-1458 / RM4099 / 269.97).